Here is a 314-residue protein sequence, read N- to C-terminus: 4-hydroxy-3-methylbut-2-enyl diphosphate reductase (314 aa).

[4Fe-4S] cluster is bound at residue cysteine 12. 2 residues coordinate (2E)-4-hydroxy-3-methylbut-2-enyl diphosphate: histidine 41 and histidine 74. 2 residues coordinate dimethylallyl diphosphate: histidine 41 and histidine 74. Positions 41 and 74 each coordinate isopentenyl diphosphate. Cysteine 96 provides a ligand contact to [4Fe-4S] cluster. Histidine 124 lines the (2E)-4-hydroxy-3-methylbut-2-enyl diphosphate pocket. Residue histidine 124 coordinates dimethylallyl diphosphate. An isopentenyl diphosphate-binding site is contributed by histidine 124. The active-site Proton donor is the glutamate 126. Threonine 168 contributes to the (2E)-4-hydroxy-3-methylbut-2-enyl diphosphate binding site. Position 198 (cysteine 198) interacts with [4Fe-4S] cluster. (2E)-4-hydroxy-3-methylbut-2-enyl diphosphate is bound by residues serine 226, serine 227, asparagine 228, and serine 270. The dimethylallyl diphosphate site is built by serine 226, serine 227, asparagine 228, and serine 270. Isopentenyl diphosphate is bound by residues serine 226, serine 227, asparagine 228, and serine 270.

The protein belongs to the IspH family. Requires [4Fe-4S] cluster as cofactor.

It catalyses the reaction isopentenyl diphosphate + 2 oxidized [2Fe-2S]-[ferredoxin] + H2O = (2E)-4-hydroxy-3-methylbut-2-enyl diphosphate + 2 reduced [2Fe-2S]-[ferredoxin] + 2 H(+). The catalysed reaction is dimethylallyl diphosphate + 2 oxidized [2Fe-2S]-[ferredoxin] + H2O = (2E)-4-hydroxy-3-methylbut-2-enyl diphosphate + 2 reduced [2Fe-2S]-[ferredoxin] + 2 H(+). It functions in the pathway isoprenoid biosynthesis; dimethylallyl diphosphate biosynthesis; dimethylallyl diphosphate from (2E)-4-hydroxy-3-methylbutenyl diphosphate: step 1/1. Its pathway is isoprenoid biosynthesis; isopentenyl diphosphate biosynthesis via DXP pathway; isopentenyl diphosphate from 1-deoxy-D-xylulose 5-phosphate: step 6/6. In terms of biological role, catalyzes the conversion of 1-hydroxy-2-methyl-2-(E)-butenyl 4-diphosphate (HMBPP) into a mixture of isopentenyl diphosphate (IPP) and dimethylallyl diphosphate (DMAPP). Acts in the terminal step of the DOXP/MEP pathway for isoprenoid precursor biosynthesis. This Pseudomonas aeruginosa (strain ATCC 15692 / DSM 22644 / CIP 104116 / JCM 14847 / LMG 12228 / 1C / PRS 101 / PAO1) protein is 4-hydroxy-3-methylbut-2-enyl diphosphate reductase.